The chain runs to 298 residues: 4-hydroxy-tetrahydrodipicolinate synthase (298 aa).

Residue T51 coordinates pyruvate. The active-site Proton donor/acceptor is Y140. K168 functions as the Schiff-base intermediate with substrate in the catalytic mechanism. I210 lines the pyruvate pocket.

It belongs to the DapA family. As to quaternary structure, homotetramer; dimer of dimers.

It localises to the cytoplasm. It carries out the reaction L-aspartate 4-semialdehyde + pyruvate = (2S,4S)-4-hydroxy-2,3,4,5-tetrahydrodipicolinate + H2O + H(+). It functions in the pathway amino-acid biosynthesis; L-lysine biosynthesis via DAP pathway; (S)-tetrahydrodipicolinate from L-aspartate: step 3/4. Its function is as follows. Catalyzes the condensation of (S)-aspartate-beta-semialdehyde [(S)-ASA] and pyruvate to 4-hydroxy-tetrahydrodipicolinate (HTPA). The sequence is that of 4-hydroxy-tetrahydrodipicolinate synthase from Acidovorax sp. (strain JS42).